The chain runs to 418 residues: MHPRRPDGFDGLGYRGGARDEQGFGGAFPARSFSTGSDLGHWVTTPPDIPGSRNLHWGEKSPPYGVPTTSTPYEGPTEEPFSSGGGGSVQGQSSEQLNRFAGFGIGLASLFTENVLAHPCIVLRRQCQVNYHAQHYHLTPFTVINIMYSFNKTQGPRALWKGMGSTFIVQGVTLGAEGIISEFTPLPREVLHKWSPKQIGEHLLLKSLTYVVAMPFYSASLIETVQSEIIRDNTGILECVKEGIGRVIGMGVPHSKRLLPLLSLIFPTVLHGVLHYIISSVIQKFVLLILKRKTYNSHLAESTSPVQSMLDAYFPELIANFAASLCSDVILYPLETVLHRLHIQGTRTIIDNTDLGYEVLPINTQYEGMRDCINTIRQEEGVFGFYKGFGAVIIQYTLHAAVLQITKIIYSTLLQNNI.

The tract at residues 1-30 is disordered; sequence MHPRRPDGFDGLGYRGGARDEQGFGGAFPA. Ser-32 carries the phosphoserine modification. The segment at 44 to 93 is disordered; sequence TTPPDIPGSRNLHWGEKSPPYGVPTTSTPYEGPTEEPFSSGGGGSVQGQS. Thr-45 is subject to Phosphothreonine. A Solcar 1 repeat occupies 96–187; that stretch reads QLNRFAGFGI…GIISEFTPLP (92 aa). 6 helical membrane passes run 103 to 123, 167 to 187, 202 to 222, 258 to 278, 314 to 334, and 382 to 402; these read FGIGLASLFTENVLAHPCIVL, FIVQGVTLGAEGIISEFTPLP, HLLLKSLTYVVAMPFYSASLI, LLPLLSLIFPTVLHGVLHYII, FPELIANFAASLCSDVILYPL, and VFGFYKGFGAVIIQYTLHAAV. A Solcar 2 repeat occupies 311–413; that stretch reads DAYFPELIAN…QITKIIYSTL (103 aa).

The protein belongs to the mitochondrial carrier (TC 2.A.29) family. As to quaternary structure, associates with the mitochondrial contact site and cristae organizing system (MICOS) complex. May associate with the endoplasmic reticulum membrane protein complex (EMC).

The protein localises to the mitochondrion outer membrane. Its function is as follows. Transmembrane protein of the mitochondrial outer membrane that controls mitochondrial organization. May regulate the assembly of the MICOS (mitochondrial contact site and cristae organizing system) complex which is essential to the biogenesis and dynamics of mitochondrial cristae, the inwards folds of the inner mitochondrial membrane. Through its interaction with the EMC (endoplasmic reticulum membrane protein complex), could regulate mitochondrial lipid homeostasis and thereby mitochondrial fission. The polypeptide is Mitochondrial outer membrane protein SLC25A46 (Homo sapiens (Human)).